The chain runs to 201 residues: Lipoprotein signal peptidase (201 aa).

Helical transmembrane passes span L33–V53, G86–G106, and V110–V130. Active-site residues include D146 and D160. The helical transmembrane segment at V158 to F178 threads the bilayer.

It belongs to the peptidase A8 family.

Its subcellular location is the cell membrane. The enzyme catalyses Release of signal peptides from bacterial membrane prolipoproteins. Hydrolyzes -Xaa-Yaa-Zaa-|-(S,diacylglyceryl)Cys-, in which Xaa is hydrophobic (preferably Leu), and Yaa (Ala or Ser) and Zaa (Gly or Ala) have small, neutral side chains.. Its pathway is protein modification; lipoprotein biosynthesis (signal peptide cleavage). This protein specifically catalyzes the removal of signal peptides from prolipoproteins. This chain is Lipoprotein signal peptidase, found in Mycobacterium leprae (strain Br4923).